The chain runs to 483 residues: Jacalin-related lectin 13 (483 aa).

Positions 1-20 (MTQKLESVGSERKSSEYMWD) are disordered. Jacalin-type lectin domains lie at 2–147 (TQKL…YVTW), 150–295 (PARM…YFTT), and 307–461 (FREK…YFFP).

This sequence belongs to the jacalin lectin family.

The polypeptide is Jacalin-related lectin 13 (JAL13) (Arabidopsis thaliana (Mouse-ear cress)).